The sequence spans 256 residues: Ribosomal RNA small subunit methyltransferase J (256 aa).

Residues R101–D102, E117–R118, S153–S154, and D176 contribute to the S-adenosyl-L-methionine site.

This sequence belongs to the methyltransferase superfamily. RsmJ family.

Its subcellular location is the cytoplasm. The enzyme catalyses guanosine(1516) in 16S rRNA + S-adenosyl-L-methionine = N(2)-methylguanosine(1516) in 16S rRNA + S-adenosyl-L-homocysteine + H(+). Functionally, specifically methylates the guanosine in position 1516 of 16S rRNA. The sequence is that of Ribosomal RNA small subunit methyltransferase J from Photobacterium profundum (strain SS9).